A 601-amino-acid polypeptide reads, in one-letter code: Elongation factor 4 (601 aa).

Positions 7–189 (SHIRNFSIIA…SIVQLVPPPQ (183 aa)) constitute a tr-type G domain. GTP-binding positions include 19-24 (DHGKST) and 136-139 (NKID).

This sequence belongs to the TRAFAC class translation factor GTPase superfamily. Classic translation factor GTPase family. LepA subfamily.

It is found in the cell inner membrane. The catalysed reaction is GTP + H2O = GDP + phosphate + H(+). Functionally, required for accurate and efficient protein synthesis under certain stress conditions. May act as a fidelity factor of the translation reaction, by catalyzing a one-codon backward translocation of tRNAs on improperly translocated ribosomes. Back-translocation proceeds from a post-translocation (POST) complex to a pre-translocation (PRE) complex, thus giving elongation factor G a second chance to translocate the tRNAs correctly. Binds to ribosomes in a GTP-dependent manner. The protein is Elongation factor 4 of Trichodesmium erythraeum (strain IMS101).